The chain runs to 310 residues: Porphobilinogen deaminase (310 aa).

Position 242 is an S-(dipyrrolylmethanemethyl)cysteine (Cys-242).

It belongs to the HMBS family. In terms of assembly, monomer. Dipyrromethane is required as a cofactor.

The enzyme catalyses 4 porphobilinogen + H2O = hydroxymethylbilane + 4 NH4(+). Its pathway is porphyrin-containing compound metabolism; protoporphyrin-IX biosynthesis; coproporphyrinogen-III from 5-aminolevulinate: step 2/4. Tetrapolymerization of the monopyrrole PBG into the hydroxymethylbilane pre-uroporphyrinogen in several discrete steps. This is Porphobilinogen deaminase from Shewanella sp. (strain W3-18-1).